Reading from the N-terminus, the 192-residue chain is MDVILLERISKLGQMGETVKVRDGFARNYLLPLGKALRANAANKTRFEAERATLEARNLERKSEAQKVADVLDGKSFIVVRSAGETGQLYGSVAARDVVEILAAEGFNIGRNQVHLNTPIKAIGLHKVELQLHAEVEIHVELNVARSAEEAERQSKGEELTSVDAIYGVDEDALRPEDFFDPEADGVDEDEA.

A disordered region spans residues 172–192; the sequence is DALRPEDFFDPEADGVDEDEA. A compositionally biased stretch (acidic residues) spans 179-192; sequence FFDPEADGVDEDEA.

This sequence belongs to the bacterial ribosomal protein bL9 family.

Binds to the 23S rRNA. This Rhizobium leguminosarum bv. trifolii (strain WSM2304) protein is Large ribosomal subunit protein bL9.